We begin with the raw amino-acid sequence, 547 residues long: MGFEELLDKVGGFGPFQLRNVALLALPRVLLPMHFLLPIFLAAVPAHRCALPGVPDNFSNEDAWLEAHLPREPDGRLSACLRFTHPQALPNSTLWGEGQNSGEQPEGEPSTVPCPQGWEYNHSEFSSTIATEWDLVCEQKGLNKAISTFFFAGVLVGAEVYGYLSDRFGRRRLLLVAYVSSLALGLASAASVSYIMFAITRTLTGMALAGFTIIVMPLELEWLDVRHRTVAGVLSSTFWTGGVMLLALIGYLIRDWRWLLLTVTLPCVPGILTLWWVPESARWLLTQGRVEEAHRYLLRCARLNGPPVGEDSLSREALNKVAAAERMVRRPSYLDLFRTPRLRYISLCCMVVWFGVNFSYYGVSLDLSGLGLNVYLTQLVFGAVELPSKLLVYLSVRHAGRRLTMAGTLLGAALAVGLRILVSPEMKSWSTALAVMGKAFSEAAFTTAYLFTSELYPTVLRQTGMGLTALVGRLGGSLAPLAALLDGVWLSLPKLAYGGIALLAACTALLLPETKQAQLPETIQDVERKSAPSSLQEEEMPMKQVQD.

The chain crosses the membrane as a helical span at residues 21–41 (VALLALPRVLLPMHFLLPIFL). A compositionally biased stretch (polar residues) spans 91–103 (NSTLWGEGQNSGE). The interval 91–112 (NSTLWGEGQNSGEQPEGEPSTV) is disordered. Helical transmembrane passes span 145-165 (AIST…GYLS), 179-199 (VSSL…MFAI), 203-223 (LTGM…LEWL), 233-253 (VLSS…GYLI), 258-278 (WLLL…WWVP), 345-365 (ISLC…GVSL), 367-387 (LSGL…VELP), 403-423 (LTMA…ILVS), 431-451 (TALA…AYLF), 465-485 (MGLT…AALL), and 492-512 (LPKL…LLLP). The tract at residues 521–547 (ETIQDVERKSAPSSLQEEEMPMKQVQD) is disordered.

Belongs to the major facilitator (TC 2.A.1) superfamily. Organic cation transporter (TC 2.A.1.19) family.

The protein resides in the basolateral cell membrane. Its subcellular location is the apical cell membrane. The protein localises to the cell membrane. The enzyme catalyses orotate(out) + L-glutamate(in) = orotate(in) + L-glutamate(out). It carries out the reaction 3',5'-cyclic GMP(in) = 3',5'-cyclic GMP(out). It catalyses the reaction GMP(in) = GMP(out). The catalysed reaction is 2'-deoxyguanosine(in) = 2'-deoxyguanosine(out). The enzyme catalyses GDP(in) = GDP(out). It carries out the reaction guanosine(in) = guanosine(out). It catalyses the reaction GTP(in) = GTP(out). The catalysed reaction is 3',5'-cyclic AMP(in) = 3',5'-cyclic AMP(out). The enzyme catalyses creatinine(in) = creatinine(out). It carries out the reaction prostaglandin E2(out) = prostaglandin E2(in). It catalyses the reaction 2-oxoglutarate(in) = 2-oxoglutarate(out). The catalysed reaction is glutarate(in) = glutarate(out). The enzyme catalyses urate(out) = urate(in). It carries out the reaction estrone 3-sulfate(out) = estrone 3-sulfate(in). Its function is as follows. Functions as a Na(+)-independent bidirectional multispecific transporter. Contributes to the renal and hepatic elimination of endogenous organic compounds from the systemic circulation into the urine and bile, respectively. Capable of transporting a wide range of purine and pyrimidine nucleobases, nucleosides and nucleotides, with cGMP, 2'deoxyguanosine and GMP being the preferred substrates. Functions as a pH- and chloride-independent cGMP bidirectional facilitative transporter that can regulate both intracellular and extracellular levels of cGMP and may be involved in cGMP signaling pathways. Mediates orotate/glutamate bidirectional exchange and most likely display a physiological role in hepatic release of glutamate into the blood. Involved in renal secretion and possible reabsorption of creatinine. Able to uptake prostaglandin E2 (PGE2) and may contribute to PGE2 renal excretion. Also transports alpha-ketoglutarate and urate. Apart from the orotate/glutamate exchange, the counterions for the uptake of other SLC22A7/OAT2 substrates remain to be identified. The chain is Solute carrier family 22 member 7 (SLC22A7) from Bos taurus (Bovine).